A 376-amino-acid chain; its full sequence is MKILVDENIPYAHKIFSRLGDVQIIHGRKITAQIVSSYDALIVRSVTNVNQSLLEGSKVRFVGSTTSGIDHIDDHWLEKSGIKFSYAAGCNAIAVVEYVFTALLLLSQRYGFHLRDKTVGIIGVGNIGRLLYQRLNAFGVPTLLCDPPQAEISTIGEWQLLEKLVTEADVLTLHTPLTYHGRHATWHLINEDLLSALPSTKRILINTCRGAVVDNVALLHALKKGKLLSVILDVWEKEPNLSLSLLNNVDIGTAHIAGYSLEGKVRGAIKIFNDYSKFLGAIQSLNVSAFLPAPMIEYVRWHGVINEEELRKLAYLIYDLQFDDILLRRNIHKPHGFDQLRTNYCERREWSSLSVGTDNNISTNMLNQLGFKSILI.

Positions 45 and 66 each coordinate substrate. Residues aspartate 146 and threonine 175 each contribute to the NAD(+) site. Arginine 209 is an active-site residue. Aspartate 233 lines the NAD(+) pocket. Glutamate 238 is a catalytic residue. Histidine 255 (proton donor) is an active-site residue. Glycine 258 contributes to the NAD(+) binding site. Tyrosine 259 provides a ligand contact to substrate.

The protein belongs to the D-isomer specific 2-hydroxyacid dehydrogenase family. PdxB subfamily. Homodimer.

Its subcellular location is the cytoplasm. It catalyses the reaction 4-phospho-D-erythronate + NAD(+) = (R)-3-hydroxy-2-oxo-4-phosphooxybutanoate + NADH + H(+). The protein operates within cofactor biosynthesis; pyridoxine 5'-phosphate biosynthesis; pyridoxine 5'-phosphate from D-erythrose 4-phosphate: step 2/5. In terms of biological role, catalyzes the oxidation of erythronate-4-phosphate to 3-hydroxy-2-oxo-4-phosphonooxybutanoate. The sequence is that of Erythronate-4-phosphate dehydrogenase from Baumannia cicadellinicola subsp. Homalodisca coagulata.